A 445-amino-acid chain; its full sequence is Glutamate--tRNA ligase 1 (445 aa).

A 'HIGH' region motif is present at residues 10-20; it reads PSPTGMLHVGN. Residues 240–244 carry the 'KMSKS' region motif; it reads KISKR. ATP is bound at residue K243.

Belongs to the class-I aminoacyl-tRNA synthetase family. Glutamate--tRNA ligase type 1 subfamily. As to quaternary structure, monomer.

Its subcellular location is the cytoplasm. The catalysed reaction is tRNA(Glu) + L-glutamate + ATP = L-glutamyl-tRNA(Glu) + AMP + diphosphate. Its function is as follows. Catalyzes the attachment of glutamate to tRNA(Glu) in a two-step reaction: glutamate is first activated by ATP to form Glu-AMP and then transferred to the acceptor end of tRNA(Glu). The protein is Glutamate--tRNA ligase 1 of Rickettsia bellii (strain OSU 85-389).